The chain runs to 272 residues: 2-dehydro-3-deoxyphosphooctonate aldolase (272 aa).

It belongs to the KdsA family.

Its subcellular location is the cytoplasm. It carries out the reaction D-arabinose 5-phosphate + phosphoenolpyruvate + H2O = 3-deoxy-alpha-D-manno-2-octulosonate-8-phosphate + phosphate. Its pathway is carbohydrate biosynthesis; 3-deoxy-D-manno-octulosonate biosynthesis; 3-deoxy-D-manno-octulosonate from D-ribulose 5-phosphate: step 2/3. It participates in bacterial outer membrane biogenesis; lipopolysaccharide biosynthesis. This is 2-dehydro-3-deoxyphosphooctonate aldolase from Geotalea daltonii (strain DSM 22248 / JCM 15807 / FRC-32) (Geobacter daltonii).